The primary structure comprises 100 residues: MELTPREKDKMLIFTAGLVAERRRERGLKLNYPEAVAYISAAVLEKAREGMSVAELMHHGTTLLTRDEVMEGVPEMISDIQVEATFPDGTKLVTVHHPIT.

This sequence belongs to the urease gamma subunit family. In terms of assembly, heterotrimer of UreA (gamma), UreB (beta) and UreC (alpha) subunits. Three heterotrimers associate to form the active enzyme.

The protein localises to the cytoplasm. The catalysed reaction is urea + 2 H2O + H(+) = hydrogencarbonate + 2 NH4(+). The protein operates within nitrogen metabolism; urea degradation; CO(2) and NH(3) from urea (urease route): step 1/1. This Nitrosococcus oceani (strain ATCC 19707 / BCRC 17464 / JCM 30415 / NCIMB 11848 / C-107) protein is Urease subunit gamma.